Reading from the N-terminus, the 89-residue chain is Putative defensin-like protein 230 (89 aa).

The N-terminal stretch at 1–26 (MRSVIWFIVSYTLMLLVLRGGKEVEA) is a signal peptide. Disulfide bonds link Cys30–Cys84, Cys40–Cys65, Cys48–Cys78, and Cys63–Cys80.

The protein belongs to the DEFL family.

Its subcellular location is the secreted. This Arabidopsis thaliana (Mouse-ear cress) protein is Putative defensin-like protein 230 (SCRL24).